The chain runs to 462 residues: Argininosuccinate lyase (462 aa).

Belongs to the lyase 1 family. Argininosuccinate lyase subfamily.

It is found in the cytoplasm. The enzyme catalyses 2-(N(omega)-L-arginino)succinate = fumarate + L-arginine. It functions in the pathway amino-acid biosynthesis; L-arginine biosynthesis; L-arginine from L-ornithine and carbamoyl phosphate: step 3/3. The sequence is that of Argininosuccinate lyase from Prochlorococcus marinus (strain SARG / CCMP1375 / SS120).